A 577-amino-acid chain; its full sequence is Arginine--tRNA ligase (577 aa).

The 'HIGH' region signature appears at 122–132; sequence PNVAKEMHVGH.

Belongs to the class-I aminoacyl-tRNA synthetase family. As to quaternary structure, monomer.

Its subcellular location is the cytoplasm. The catalysed reaction is tRNA(Arg) + L-arginine + ATP = L-arginyl-tRNA(Arg) + AMP + diphosphate. The chain is Arginine--tRNA ligase from Escherichia coli O1:K1 / APEC.